Here is a 949-residue protein sequence, read N- to C-terminus: Glycine dehydrogenase (decarboxylating) (949 aa).

An N6-(pyridoxal phosphate)lysine modification is found at Lys700.

This sequence belongs to the GcvP family. In terms of assembly, the glycine cleavage system is composed of four proteins: P, T, L and H. Pyridoxal 5'-phosphate is required as a cofactor.

The enzyme catalyses N(6)-[(R)-lipoyl]-L-lysyl-[glycine-cleavage complex H protein] + glycine + H(+) = N(6)-[(R)-S(8)-aminomethyldihydrolipoyl]-L-lysyl-[glycine-cleavage complex H protein] + CO2. Its function is as follows. The glycine cleavage system catalyzes the degradation of glycine. The P protein binds the alpha-amino group of glycine through its pyridoxal phosphate cofactor; CO(2) is released and the remaining methylamine moiety is then transferred to the lipoamide cofactor of the H protein. The protein is Glycine dehydrogenase (decarboxylating) of Flavobacterium johnsoniae (strain ATCC 17061 / DSM 2064 / JCM 8514 / BCRC 14874 / CCUG 350202 / NBRC 14942 / NCIMB 11054 / UW101) (Cytophaga johnsonae).